Here is a 285-residue protein sequence, read N- to C-terminus: NADPH-dependent 7-cyano-7-deazaguanine reductase (285 aa).

91 to 93 contributes to the substrate binding site; sequence IES. 93-94 is a binding site for NADPH; it reads SK. The active-site Thioimide intermediate is cysteine 193. Aspartate 200 acts as the Proton donor in catalysis. A substrate-binding site is contributed by 232–233; sequence HE. 261-262 contributes to the NADPH binding site; sequence RG.

The protein belongs to the GTP cyclohydrolase I family. QueF type 2 subfamily. As to quaternary structure, homodimer.

The protein resides in the cytoplasm. It carries out the reaction 7-aminomethyl-7-carbaguanine + 2 NADP(+) = 7-cyano-7-deazaguanine + 2 NADPH + 3 H(+). It functions in the pathway tRNA modification; tRNA-queuosine biosynthesis. Its function is as follows. Catalyzes the NADPH-dependent reduction of 7-cyano-7-deazaguanine (preQ0) to 7-aminomethyl-7-deazaguanine (preQ1). The protein is NADPH-dependent 7-cyano-7-deazaguanine reductase of Shewanella frigidimarina (strain NCIMB 400).